Consider the following 405-residue polypeptide: Glycosylated lysosomal membrane protein A (405 aa).

A signal peptide spans 1–25 (MGCTRGWRLLLLLGLVCVGALQGRG). The Lumenal segment spans residues 26–365 (QEESREVSLQ…YGEPPRDSFS (340 aa)). 15 N-linked (GlcNAc...) asparagine glycosylation sites follow: Asn55, Asn86, Asn125, Asn129, Asn143, Asn153, Asn157, Asn164, Asn169, Asn179, Asn206, Asn222, Asn267, Asn304, and Asn331. Residues 366 to 386 (ILVICIMAVALGTPLLLLIVG) form a helical membrane-spanning segment. The Cytoplasmic segment spans residues 387-405 (TLVVTALRHKVYSNYEPIN). A Lysosomal targeting motif motif is present at residues 401–405 (YEPIN).

The protein belongs to the GLMP family. As to quaternary structure, interacts (via lumenal domain) with lysosomal protein MFSD1; the interaction starts while both proteins are still in the endoplasmic reticulum and is required for stabilization of MFSD1 in lysosomes but has no direct effect on its targeting to lysosomes or transporter activity.

The protein resides in the lysosome membrane. Required to protect lysosomal transporter MFSD1 from lysosomal proteolysis and for MFSD1 lysosomal localization. This chain is Glycosylated lysosomal membrane protein A (glmp-a), found in Xenopus laevis (African clawed frog).